The sequence spans 402 residues: mRNA-capping enzyme subunit alpha (402 aa).

Residue Lys67 is the N6-GMP-lysine intermediate of the active site. The interval 374 to 402 (SVTKRKLDETSNDDAPAIKKVAKESEKEI) is disordered.

The protein belongs to the eukaryotic GTase family. As to quaternary structure, heterodimer. The mRNA-capping enzyme is composed of two separate chains alpha and beta, respectively a mRNA guanylyltransferase and an mRNA 5'-triphosphate monophosphatase.

The protein resides in the nucleus. The enzyme catalyses a 5'-end diphospho-ribonucleoside in mRNA + GTP + H(+) = a 5'-end (5'-triphosphoguanosine)-ribonucleoside in mRNA + diphosphate. Functionally, second step of mRNA capping. Transfer of the GMP moiety of GTP to the 5'-end of RNA via an enzyme-GMP covalent reaction intermediate. The protein is mRNA-capping enzyme subunit alpha (ceg1) of Schizosaccharomyces pombe (strain 972 / ATCC 24843) (Fission yeast).